A 357-amino-acid polypeptide reads, in one-letter code: Putative ABC transporter ATP-binding protein MG303 (357 aa).

The ABC transporter domain maps to 72 to 312 (LFFNNISVFV…TSWLMQYGIT (241 aa)). 107–114 (GESGSGKT) lines the ATP pocket.

The protein belongs to the ABC transporter superfamily.

The polypeptide is Putative ABC transporter ATP-binding protein MG303 (Mycoplasma genitalium (strain ATCC 33530 / DSM 19775 / NCTC 10195 / G37) (Mycoplasmoides genitalium)).